We begin with the raw amino-acid sequence, 112 residues long: Protein ORF3 (112 aa).

Hydrophobic regions lie at residues 7–23 and 40–60; these read ALGL…LCCP and AAVV…PIFI. Residues 28–66 are interaction with host HPX; sequence VSRLAVAAGKRGAAVVSGVTGLILSPSPSPIFIQPTPSH. The homodimerization, and interaction with host AMBP/bikunin stretch occupies residues 70-112; it reads QPPPGLELALGSQSVHSAPLGVTSPSAPPLPPVVDLPQLGLRR. The disordered stretch occupies residues 89–112; that stretch reads LGVTSPSAPPLPPVVDLPQLGLRR. The segment at 93–102 is interaction with host SRC, HCK, FYN, PIK3R3 and GRB2; the sequence is SPSAPPLPPV. The short motif at 94-97 is the PTAP/PSAP motif element; that stretch reads PSAP.

Belongs to the hepevirus ORF3 protein family. As to quaternary structure, forms homooligomers. Interacts with host SRC, HCK, FYN, PIK3R3 and GRB2 (via SH3 domain); binding does not activate the kinases. Interacts with host AMBP/bikunin and AMBP/alpha-1-microglobulin peptides. Interacts with host HPX/hemopexin. Interacts (when phosphorylated) with capsid protein ORF2. Interacts with host TSG101; this interaction plays a role in viral release from the host cell. Interacts with host SIRPA; this interaction down-regulates the phosphorylation of host IRF3. In terms of processing, palmitoylated in the N-terminus.

The protein resides in the host endoplasmic reticulum membrane. The protein localises to the host cytoplasm. It localises to the host cytoskeleton. Its subcellular location is the virion. It is found in the host cell membrane. Functionally, small multifunctional phosphoprotein involved in virion morphogenesis, egress and counteracting host innate immunity. Plays critical roles in the final steps of viral release by interacting with host TSG101, a member of the vacuolar protein-sorting pathway and using other cellular host proteins involved in vesicle formation pathway. Also acts as a viroporin and forms ion conductive pores allowing viral particle release. Impairs the generation of type I interferon by down-regulating host TLR3 and TLR7 as well as their downstream signaling pathways. Down-regulates the phosphorylation of host IRF3 via the interaction with host SIRP-alpha, thereby inhibiting IFN-I expression. Interacts with host microtubules. This is Protein ORF3 from Bandicota bengalensis (lesser bandicoot rat).